Reading from the N-terminus, the 918-residue chain is Protein translocase subunit SecA (918 aa).

ATP contacts are provided by residues glutamine 87, 105–109 (GEGKT), and aspartate 500. The tract at residues 876 to 918 (AGALPVAETLERDTPESWRNTPRNAPCPCGSGKKYKHCHGQAR) is disordered. Zn(2+)-binding residues include cysteine 902, cysteine 904, cysteine 913, and histidine 914. A compositionally biased stretch (basic residues) spans 908–918 (KKYKHCHGQAR).

It belongs to the SecA family. In terms of assembly, monomer and homodimer. Part of the essential Sec protein translocation apparatus which comprises SecA, SecYEG and auxiliary proteins SecDF-YajC and YidC. Requires Zn(2+) as cofactor.

It localises to the cell inner membrane. The protein resides in the cytoplasm. It carries out the reaction ATP + H2O + cellular proteinSide 1 = ADP + phosphate + cellular proteinSide 2.. Part of the Sec protein translocase complex. Interacts with the SecYEG preprotein conducting channel. Has a central role in coupling the hydrolysis of ATP to the transfer of proteins into and across the cell membrane, serving both as a receptor for the preprotein-SecB complex and as an ATP-driven molecular motor driving the stepwise translocation of polypeptide chains across the membrane. This is Protein translocase subunit SecA from Rhodospirillum centenum (strain ATCC 51521 / SW).